The sequence spans 458 residues: Phosphoglucosamine mutase (458 aa).

Ser108 acts as the Phosphoserine intermediate in catalysis. Mg(2+)-binding residues include Ser108, Asp247, Asp249, and Asp251. Ser108 carries the post-translational modification Phosphoserine.

This sequence belongs to the phosphohexose mutase family. Requires Mg(2+) as cofactor. Activated by phosphorylation.

The enzyme catalyses alpha-D-glucosamine 1-phosphate = D-glucosamine 6-phosphate. In terms of biological role, catalyzes the conversion of glucosamine-6-phosphate to glucosamine-1-phosphate. The sequence is that of Phosphoglucosamine mutase from Thiobacillus denitrificans (strain ATCC 25259 / T1).